We begin with the raw amino-acid sequence, 451 residues long: MGRYFGTSGIREVVNEKLTPELALKVGLALGTYLQEGKVVIGCDTRTSSVMLKNAVISGLLATGIDVIDIGLAPTPLTGFAIRLYNAEAGVTITASHNPPQYNGIKVWDRDGMAYTPDKEHELEKIIESGNFRRVPWNEVGTLKTANPRKEYIEAILREINLKGSYTVVIDAGNGAGSIVSPYLHRELGNRVITLNSDPSGFFVRELEPNKESLSMLEKTVKVLNADIGIAHDGDADRVGVVDENGEFVEYEVMLSLIAGYMLKKYGKGKIVTTVDAGFALDDYIRELGGEVVRTRVGDVAVAEELVKHGGVFGGEPSGTWIMPQWNLTPDGIFASALVLEMIDRLGPIGELAKDVPKYVTLRKKIPCSNELKNKVMNKIADLIPREFSYERIITIDGIRIENDDWWILFRPSGTEPIMRITLEAHTEEMAERLMKKAENLVKSVIKDLSS.

The active-site Phosphoserine intermediate is Ser-96. Residues Ser-96, Asp-233, Asp-235, and Asp-237 each coordinate Mg(2+). Ser-96 carries the phosphoserine modification.

Belongs to the phosphohexose mutase family. It depends on Mg(2+) as a cofactor. In terms of processing, activated by phosphorylation.

The enzyme catalyses alpha-D-glucosamine 1-phosphate = D-glucosamine 6-phosphate. Functionally, catalyzes the conversion of glucosamine-6-phosphate to glucosamine-1-phosphate. The protein is Probable phosphoglucosamine mutase of Pyrococcus horikoshii (strain ATCC 700860 / DSM 12428 / JCM 9974 / NBRC 100139 / OT-3).